The following is a 202-amino-acid chain: Endothelin-1 (202 aa).

The signal sequence occupies residues 1–23; sequence MDYFSMMVSLLLVAFHGAPETAA. Positions 24–49 are disordered; it reads SGTELSTGAENPGEKPPASAPWRPRR. The propeptide occupies 24–50; the sequence is SGTELSTGAENPGEKPPASAPWRPRRS. 2 cysteine pairs are disulfide-bonded: C53–C67 and C55–C63. A propeptide spanning residues 74 to 202 is cleaved from the precursor; that stretch reads VNTPGHIVPY…EQKVTHNRTH (129 aa). An endothelin-like region spans residues 110 to 124; sequence CQCTSPHDKKCWNFC.

Belongs to the endothelin/sarafotoxin family.

It is found in the secreted. Its function is as follows. Endothelins are endothelium-derived vasoconstrictor peptides. Probable ligand for G-protein coupled receptors EDNRA and EDNRB which activates PTK2B, BCAR1, BCAR3 and, GTPases RAP1 and RHOA cascade in glomerular mesangial cells. Also binds the DEAR/FBXW7-AS1 receptor. Promotes mesenteric arterial wall remodeling via activation of ROCK signaling and subsequent colocalization of NFATC3 with F-actin filaments. NFATC3 then translocates to the nucleus where it subsequently promotes the transcription of the smooth muscle hypertrophy and differentiation marker ACTA2. In Oryctolagus cuniculus (Rabbit), this protein is Endothelin-1 (EDN1).